The following is a 922-amino-acid chain: Dual serine/threonine and tyrosine protein kinase (922 aa).

The region spanning 645-899 is the Protein kinase domain; the sequence is PKLGRELGRG…PLLGIVEPSL (255 aa). Residues 651–659 and K674 each bind ATP; that span reads LGRGQYGVV. D770 (proton acceptor) is an active-site residue.

This sequence belongs to the protein kinase superfamily. Ser/Thr protein kinase family.

The protein localises to the cytoplasm. Its subcellular location is the cell membrane. It localises to the apical cell membrane. The protein resides in the basolateral cell membrane. It is found in the cell junction. It carries out the reaction L-seryl-[protein] + ATP = O-phospho-L-seryl-[protein] + ADP + H(+). The enzyme catalyses L-threonyl-[protein] + ATP = O-phospho-L-threonyl-[protein] + ADP + H(+). The catalysed reaction is L-tyrosyl-[protein] + ATP = O-phospho-L-tyrosyl-[protein] + ADP + H(+). May act as a positive regulator of ERK phosphorylation downstream of fibroblast growth factor-receptor activation. May induce both caspase-dependent apoptosis and caspase-independent cell death. May play a role in the embryonic development. The polypeptide is Dual serine/threonine and tyrosine protein kinase (Tetraodon nigroviridis (Spotted green pufferfish)).